The sequence spans 480 residues: Endothelial transcription factor GATA-2 (480 aa).

Position 73 is a phosphoserine (Ser-73). Arg-86 carries the asymmetric dimethylarginine modification. A disordered region spans residues 166–208; the sequence is SGSHLFGFPPTPPKEVSPDPSTTGAASPASSSAGGSVARGEDK. A compositionally biased stretch (low complexity) spans 183 to 201; the sequence is PDPSTTGAASPASSSAGGS. Ser-192 bears the Phosphoserine mark. 2 GATA-type zinc fingers span residues 295–319 and 349–373; these read CVNCGATATPLWRRDGTGHYLCNAC and CANCQTTTTTLWRRNANGDPVCNAC. Residue Lys-389 forms a Glycyl lysine isopeptide (Lys-Gly) (interchain with G-Cter in SUMO2) linkage. The interval 457–480 is disordered; the sequence is TPIHPSSSLSFGHPHPSSMVTAMG.

In terms of assembly, interacts with BRD3. Interacts with AR and CCAR1. Interacts with MDFIC.

It is found in the nucleus. Functionally, transcriptional activator which regulates endothelin-1 gene expression in endothelial cells. Binds to the consensus sequence 5'-AGATAG-3'. The sequence is that of Endothelial transcription factor GATA-2 (Gata2) from Mus musculus (Mouse).